The chain runs to 438 residues: Na(+)/H(+) antiporter NhaA (438 aa).

The next 11 membrane-spanning stretches (helical) occupy residues 23–43, 62–82, 104–124, 133–153, 162–182, 185–205, 221–241, 302–322, 337–357, 372–392, and 410–430; these read FGGIFLFLNAVLAMVVANSFL, FFIGFSLHNWIDDVLMALFFL, SFPVIAAIGGMIAPGLIYFFL, GFGIPMATDIAFALGVIMLLG, VFLITLAVADDLGAIVVIALF, TNLKFAWLLGALGVVLVLAVL, VLLWFCVHQSGIHATIAAVIL, FLAPISGYFIMPLFAFANAGV, LGVILGLCLGKPLGIFLITFI, WWHILGAGLLAGIGFTMSMFI, and IAILLGSLISGIIGALYLFAL.

It belongs to the NhaA Na(+)/H(+) (TC 2.A.33) antiporter family.

The protein resides in the cell inner membrane. It carries out the reaction Na(+)(in) + 2 H(+)(out) = Na(+)(out) + 2 H(+)(in). Its function is as follows. Na(+)/H(+) antiporter that extrudes sodium in exchange for external protons. This is Na(+)/H(+) antiporter NhaA from Helicobacter pylori (strain ATCC 700392 / 26695) (Campylobacter pylori).